The chain runs to 306 residues: tRNA dimethylallyltransferase 2 (306 aa).

Residue 19–26 (GATASGKT) coordinates ATP. 21–26 (TASGKT) lines the substrate pocket. Residues 44–47 (DSRQ) are interaction with substrate tRNA.

The protein belongs to the IPP transferase family. Monomer. Mg(2+) is required as a cofactor.

The enzyme catalyses adenosine(37) in tRNA + dimethylallyl diphosphate = N(6)-dimethylallyladenosine(37) in tRNA + diphosphate. In terms of biological role, catalyzes the transfer of a dimethylallyl group onto the adenine at position 37 in tRNAs that read codons beginning with uridine, leading to the formation of N6-(dimethylallyl)adenosine (i(6)A). The protein is tRNA dimethylallyltransferase 2 of Citrifermentans bemidjiense (strain ATCC BAA-1014 / DSM 16622 / JCM 12645 / Bem) (Geobacter bemidjiensis).